A 232-amino-acid polypeptide reads, in one-letter code: Beta-casein (232 aa).

A signal peptide spans 1 to 15; it reads MKVLILACRVALALA. Phosphoserine is present on residues Ser-30, Ser-32, Ser-33, and Ser-34.

It belongs to the beta-casein family. In terms of tissue distribution, mammary gland specific. Secreted in milk.

It localises to the secreted. Its function is as follows. Important role in determination of the surface properties of the casein micelles. This chain is Beta-casein (CSN2), found in Camelus dromedarius (Dromedary).